We begin with the raw amino-acid sequence, 326 residues long: Beta-ketoacyl-[acyl-carrier-protein] synthase III (326 aa).

Catalysis depends on residues C116 and H253. The ACP-binding stretch occupies residues 254–258 (QANIR). The active site involves N283.

It belongs to the thiolase-like superfamily. FabH family. As to quaternary structure, homodimer.

It is found in the cytoplasm. It catalyses the reaction malonyl-[ACP] + acetyl-CoA + H(+) = 3-oxobutanoyl-[ACP] + CO2 + CoA. The protein operates within lipid metabolism; fatty acid biosynthesis. Catalyzes the condensation reaction of fatty acid synthesis by the addition to an acyl acceptor of two carbons from malonyl-ACP. Catalyzes the first condensation reaction which initiates fatty acid synthesis and may therefore play a role in governing the total rate of fatty acid production. Possesses both acetoacetyl-ACP synthase and acetyl transacylase activities. Its substrate specificity determines the biosynthesis of branched-chain and/or straight-chain of fatty acids. In Jannaschia sp. (strain CCS1), this protein is Beta-ketoacyl-[acyl-carrier-protein] synthase III.